The chain runs to 446 residues: UDP-N-acetylmuramoylalanine--D-glutamate ligase (446 aa).

118–124 (GSNGKST) lines the ATP pocket.

It belongs to the MurCDEF family.

Its subcellular location is the cytoplasm. It catalyses the reaction UDP-N-acetyl-alpha-D-muramoyl-L-alanine + D-glutamate + ATP = UDP-N-acetyl-alpha-D-muramoyl-L-alanyl-D-glutamate + ADP + phosphate + H(+). It functions in the pathway cell wall biogenesis; peptidoglycan biosynthesis. In terms of biological role, cell wall formation. Catalyzes the addition of glutamate to the nucleotide precursor UDP-N-acetylmuramoyl-L-alanine (UMA). This chain is UDP-N-acetylmuramoylalanine--D-glutamate ligase, found in Pseudoalteromonas translucida (strain TAC 125).